Here is a 347-residue protein sequence, read N- to C-terminus: ATP-dependent (S)-NAD(P)H-hydrate dehydratase (347 aa).

One can recognise a YjeF C-terminal domain in the interval 53 to 344 (TLQLVRNIIP…AEVGAAFSKL (292 aa)). Residue Tyr-85 is modified to Phosphotyrosine. Residues Gly-153 and 206–212 (NHVEFSR) each bind (6S)-NADPHX. N-linked (GlcNAc...) asparagine glycosylation is present at Asn-240. ATP is bound by residues 246 to 250 (KGERD) and 265 to 274 (GSSRRCGGQG). Residue Asp-275 coordinates (6S)-NADPHX. An N-linked (GlcNAc...) asparagine glycan is attached at Asn-297.

It belongs to the NnrD/CARKD family. It depends on Mg(2+) as a cofactor.

Its subcellular location is the mitochondrion. The enzyme catalyses (6S)-NADHX + ATP = ADP + phosphate + NADH + H(+). The catalysed reaction is (6S)-NADPHX + ATP = ADP + phosphate + NADPH + H(+). In terms of biological role, catalyzes the dehydration of the S-form of NAD(P)HX at the expense of ATP, which is converted to ADP. Together with NAD(P)HX epimerase, which catalyzes the epimerization of the S- and R-forms, the enzyme allows the repair of both epimers of NAD(P)HX, a damaged form of NAD(P)H that is a result of enzymatic or heat-dependent hydration. In Homo sapiens (Human), this protein is ATP-dependent (S)-NAD(P)H-hydrate dehydratase.